The following is a 247-amino-acid chain: Cell division protein ZapD (247 aa).

It belongs to the ZapD family. Interacts with FtsZ.

The protein resides in the cytoplasm. Cell division factor that enhances FtsZ-ring assembly. Directly interacts with FtsZ and promotes bundling of FtsZ protofilaments, with a reduction in FtsZ GTPase activity. This chain is Cell division protein ZapD, found in Salmonella agona (strain SL483).